Consider the following 1011-residue polypeptide: Protein translocase subunit SecA, chloroplastic (1011 aa).

Positions 1 to 17 are enriched in polar residues; that stretch reads MATSSLCSSFTSQTCNP. The tract at residues 1–22 is disordered; sequence MATSSLCSSFTSQTCNPHSRPH. The transit peptide at 1–59 directs the protein to the chloroplast; that stretch reads MATSSLCSSFTSQTCNPHSRPHRKTLTLPGSVFLCRQFHLNSPSVSKTRRIRTRQSGPV. 164 to 171 is an ATP binding site; sequence MRTGEGKT. The disordered stretch occupies residues 976 to 1011; the sequence is QDKMENQKSGKRNARPPTDTNPDPVGTVEPSTSASS.

Belongs to the SecA family.

Its subcellular location is the plastid. It localises to the chloroplast stroma. The protein resides in the chloroplast thylakoid membrane. The catalysed reaction is ATP + H2O + chloroplast-proteinSide 1 = ADP + phosphate + chloroplast-proteinSide 2.. Functionally, has a central role in coupling the hydrolysis of ATP to the transfer of proteins across the thylakoid membrane. Facilitates the transport of precursor proteins from the chloroplast stroma to thylakoid lumen. The protein is Protein translocase subunit SecA, chloroplastic of Pisum sativum (Garden pea).